A 518-amino-acid polypeptide reads, in one-letter code: FAD-dependent monooxygenase tpcD (518 aa).

The N-terminal stretch at 1–22 (MQLLGTLSWLYAIQASIGSSKA) is a signal peptide. N-linked (GlcNAc...) asparagine glycosylation occurs at Asn61. The FAD-binding PCMH-type domain occupies 75–246 (QSAQPACLVH…TRFDLDVFQQ (172 aa)). His112 carries the pros-8alpha-FAD histidine modification. Asn163, Asn208, Asn216, and Asn346 each carry an N-linked (GlcNAc...) asparagine glycan.

This sequence belongs to the oxygen-dependent FAD-linked oxidoreductase family. The cofactor is FAD.

Its pathway is secondary metabolite biosynthesis; terpenoid biosynthesis. FAD-dependent monooxygenase; part of the gene cluster that mediates the biosynthesis of terpestacin. The bifunctional terpene synthase tpcA converts isopentenyl diphosphate (IPP) and dimethylallyl diphosphate (DMAPP) into the sesterterpene preterpestacin I. The C-terminal prenyltransferase (PT) domain of tpcA catalyzes formation of GFPP, whereas the N-terminal terpene cyclase (TC) domain catalyzes the cyclization of GFPP into preterpestacin I. The cytochrome P450 monooxygenase tpcB then hydroxylates preterpestacin I to yield 24-hydroxypreterpstacin I (renamed as preterpestacin II) whereas the cytochrome P450 monooxygenase tpcC further hydroxylates preterpestacin II to yield 16,17-dihydroxypreterpestacin II (renamed as preterpestacin III). Finally, the FAD-dependent monooxygenase tpcD converts preterpestacin III into terpestacin. The protein is FAD-dependent monooxygenase tpcD of Cochliobolus heterostrophus (strain C5 / ATCC 48332 / race O) (Southern corn leaf blight fungus).